The sequence spans 451 residues: Adenylyltransferase and sulfurtransferase MOCS3-1 (451 aa).

Residues 42 to 62 (GEDSDEAEESSNDMPTPQTKL) form a disordered region. Over residues 43–52 (EDSDEAEESS) the composition is skewed to acidic residues. Thr60 bears the Phosphothreonine mark. Residues Gly99, Asp120, 127-131 (SNLHR), Lys144, and 188-189 (DN) contribute to the ATP site. Zn(2+)-binding residues include Cys229 and Cys232. Cys246 acts as the Glycyl thioester intermediate; for adenylyltransferase activity in catalysis. Residues Cys304 and Cys307 each contribute to the Zn(2+) site. The Rhodanese domain maps to 353–449 (QSQPHLLLDV…WTGSVDATFP (97 aa)). Cys408 acts as the Cysteine persulfide intermediate; for sulfurtransferase activity in catalysis.

In the N-terminal section; belongs to the HesA/MoeB/ThiF family. UBA4 subfamily. The cofactor is Zn(2+).

The protein localises to the cytoplasm. It carries out the reaction [molybdopterin-synthase sulfur-carrier protein]-C-terminal Gly-Gly + ATP + H(+) = [molybdopterin-synthase sulfur-carrier protein]-C-terminal Gly-Gly-AMP + diphosphate. The enzyme catalyses [molybdopterin-synthase sulfur-carrier protein]-C-terminal Gly-Gly-AMP + S-sulfanyl-L-cysteinyl-[cysteine desulfurase] + AH2 = [molybdopterin-synthase sulfur-carrier protein]-C-terminal-Gly-aminoethanethioate + L-cysteinyl-[cysteine desulfurase] + A + AMP + 2 H(+). It participates in tRNA modification; 5-methoxycarbonylmethyl-2-thiouridine-tRNA biosynthesis. The protein operates within cofactor biosynthesis; molybdopterin biosynthesis. In terms of biological role, plays a central role in 2-thiolation of mcm(5)S(2)U at tRNA wobble positions of cytosolic tRNA(Lys), tRNA(Glu) and tRNA(Gln). Also essential during biosynthesis of the molybdenum cofactor. Acts by mediating the C-terminal thiocarboxylation of sulfur carriers URM1 and MOCS2A. Its N-terminus first activates URM1 and MOCS2A as acyl-adenylates (-COAMP), then the persulfide sulfur on the catalytic cysteine is transferred to URM1 and MOCS2A to form thiocarboxylation (-COSH) of their C-terminus. The reaction probably involves hydrogen sulfide that is generated from the persulfide intermediate and that acts as a nucleophile towards URM1 and MOCS2A. Subsequently, a transient disulfide bond is formed. Does not use thiosulfate as sulfur donor; NFS1 probably acting as a sulfur donor for thiocarboxylation reactions. This Drosophila pseudoobscura pseudoobscura (Fruit fly) protein is Adenylyltransferase and sulfurtransferase MOCS3-1.